The primary structure comprises 239 residues: Small ribosomal subunit protein uS2 (239 aa).

This sequence belongs to the universal ribosomal protein uS2 family.

The chain is Small ribosomal subunit protein uS2 from Parasynechococcus marenigrum (strain WH8102).